A 188-amino-acid polypeptide reads, in one-letter code: Segregation and condensation protein B (188 aa).

The protein belongs to the ScpB family. Homodimer. Homodimerization may be required to stabilize the binding of ScpA to the Smc head domains. Component of a cohesin-like complex composed of ScpA, ScpB and the Smc homodimer, in which ScpA and ScpB bind to the head domain of Smc. The presence of the three proteins is required for the association of the complex with DNA.

Its subcellular location is the cytoplasm. Functionally, participates in chromosomal partition during cell division. May act via the formation of a condensin-like complex containing Smc and ScpA that pull DNA away from mid-cell into both cell halves. This is Segregation and condensation protein B from Streptococcus gordonii (strain Challis / ATCC 35105 / BCRC 15272 / CH1 / DL1 / V288).